The primary structure comprises 399 residues: Carbamoyl phosphate synthase small chain (399 aa).

The segment at 1 to 206 (MTQTIPSPKP…NKGYKTNNDA (206 aa)) is CPSase. L-glutamine contacts are provided by serine 60, glycine 258, and glycine 260. Residues 210–398 (HIVAIDYGIK…FNLIMDYKKT (189 aa)) form the Glutamine amidotransferase type-1 domain. Residue cysteine 287 is the Nucleophile of the active site. Positions 288, 291, 329, 331, and 332 each coordinate L-glutamine. Residues histidine 371 and glutamate 373 contribute to the active site.

This sequence belongs to the CarA family. Composed of two chains; the small (or glutamine) chain promotes the hydrolysis of glutamine to ammonia, which is used by the large (or ammonia) chain to synthesize carbamoyl phosphate. Tetramer of heterodimers (alpha,beta)4.

It catalyses the reaction hydrogencarbonate + L-glutamine + 2 ATP + H2O = carbamoyl phosphate + L-glutamate + 2 ADP + phosphate + 2 H(+). The catalysed reaction is L-glutamine + H2O = L-glutamate + NH4(+). It participates in amino-acid biosynthesis; L-arginine biosynthesis; carbamoyl phosphate from bicarbonate: step 1/1. It functions in the pathway pyrimidine metabolism; UMP biosynthesis via de novo pathway; (S)-dihydroorotate from bicarbonate: step 1/3. Small subunit of the glutamine-dependent carbamoyl phosphate synthetase (CPSase). CPSase catalyzes the formation of carbamoyl phosphate from the ammonia moiety of glutamine, carbonate, and phosphate donated by ATP, constituting the first step of 2 biosynthetic pathways, one leading to arginine and/or urea and the other to pyrimidine nucleotides. The small subunit (glutamine amidotransferase) binds and cleaves glutamine to supply the large subunit with the substrate ammonia. This Bartonella henselae (strain ATCC 49882 / DSM 28221 / CCUG 30454 / Houston 1) (Rochalimaea henselae) protein is Carbamoyl phosphate synthase small chain.